The sequence spans 141 residues: Large ribosomal subunit protein uL14 (141 aa).

Belongs to the universal ribosomal protein uL14 family. In terms of assembly, part of the 50S ribosomal subunit. Forms a cluster with proteins L3 and L24e, part of which may contact the 16S rRNA in 2 intersubunit bridges.

In terms of biological role, binds to 23S rRNA. Forms part of two intersubunit bridges in the 70S ribosome. This is Large ribosomal subunit protein uL14 from Pyrococcus horikoshii (strain ATCC 700860 / DSM 12428 / JCM 9974 / NBRC 100139 / OT-3).